Reading from the N-terminus, the 207-residue chain is Twist-related protein 1 (207 aa).

Residues 1-18 (MMQDVSSSPVSPADDSLS) show a composition bias toward low complexity. Positions 1 to 110 (MMQDVSSSPV…GGGSPQSYEE (110 aa)) are disordered. The span at 34–43 (RGGRKRRSSR) shows a compositional bias: basic residues. 2 stretches are compositionally biased toward gly residues: residues 46 to 65 (AGGG…GGDE) and 80 to 104 (GCGG…GGGS). In terms of domain architecture, bHLH spans 113-164 (TQRVMANVRERQRTQSLNEAFAALRKIIPTLPSDKLSKIQTLKLAARYIDFL). A sufficient for transactivation activity region spans residues 166-196 (QVLQSDELDSKMASCSYVAHERLSYAFSVWR).

In terms of assembly, efficient DNA binding requires dimerization with another bHLH protein. Homodimer or heterodimer with E proteins such as TCF3. ID1 binds preferentially to TCF3 but does not interact efficiently with TWIST1 so ID1 levels control the amount of TCF3 available to dimerize with TWIST and thus determine the type of dimer formed.

The protein resides in the nucleus. Functionally, acts as a transcriptional regulator. Inhibits myogenesis by sequestrating E proteins, inhibiting trans-activation by MEF2, and inhibiting DNA-binding by MYOD1 through physical interaction. This interaction probably involves the basic domains of both proteins. Also represses expression of pro-inflammatory cytokines such as TNFA and IL1B. Regulates cranial suture patterning and fusion. Activates transcription as a heterodimer with E proteins. Regulates gene expression differentially, depending on dimer composition. Homodimers induce expression of FGFR2 and POSTN while heterodimers repress FGFR2 and POSTN expression and induce THBS1 expression. Heterodimerization is also required for osteoblast differentiation. Represses the activity of the circadian transcriptional activator: NPAS2-BMAL1 heterodimer. This is Twist-related protein 1 (TWIST1) from Cebus capucinus (White-faced sapajou).